The sequence spans 117 residues: Ribosome maturation factor RimP (117 aa).

It belongs to the RimP family.

The protein resides in the cytoplasm. Required for maturation of 30S ribosomal subunits. The chain is Ribosome maturation factor RimP from Rickettsia prowazekii (strain Madrid E).